The sequence spans 226 residues: MNENLFTSFSAPTILGQPATIPIIMFPTLLIPTSKHLINNQLTTVQQNLIKLTLKQMMAPHNAKGQSWSLMLMSLITFITMTNLLGLLPHSFTPTTQLSMNLAMAIPLWAGTIITGLRFKTKNFLAHMLPQGTPTPLIPMLVMIETISLLIQPMALAVRLTANITAGHLLMHLIGNTMLTLSTINLSTTLLTSVLLMLLTILEIAVALIQAYVFTLLVNLYLHNNT.

The next 6 helical transmembrane spans lie at 11–31 (APTI…TLLI), 68–88 (WSLM…LGLL), 97–117 (QLSM…ITGL), 138–158 (IPML…ALAV), 164–184 (ITAG…LSTI), and 194–214 (VLLM…AYVF).

This sequence belongs to the ATPase A chain family. As to quaternary structure, component of the ATP synthase complex composed at least of ATP5F1A/subunit alpha, ATP5F1B/subunit beta, ATP5MC1/subunit c (homooctomer), MT-ATP6/subunit a, MT-ATP8/subunit 8, ATP5ME/subunit e, ATP5MF/subunit f, ATP5MG/subunit g, ATP5MK/subunit k, ATP5MJ/subunit j, ATP5F1C/subunit gamma, ATP5F1D/subunit delta, ATP5F1E/subunit epsilon, ATP5PF/subunit F6, ATP5PB/subunit b, ATP5PD/subunit d, ATP5PO/subunit OSCP. ATP synthase complex consists of a soluble F(1) head domain (subunits alpha(3) and beta(3)) - the catalytic core - and a membrane F(0) domain - the membrane proton channel (subunits c, a, 8, e, f, g, k and j). These two domains are linked by a central stalk (subunits gamma, delta, and epsilon) rotating inside the F1 region and a stationary peripheral stalk (subunits F6, b, d, and OSCP). Interacts with DNAJC30; interaction is direct.

It is found in the mitochondrion inner membrane. The catalysed reaction is H(+)(in) = H(+)(out). Functionally, subunit a, of the mitochondrial membrane ATP synthase complex (F(1)F(0) ATP synthase or Complex V) that produces ATP from ADP in the presence of a proton gradient across the membrane which is generated by electron transport complexes of the respiratory chain. ATP synthase complex consist of a soluble F(1) head domain - the catalytic core - and a membrane F(1) domain - the membrane proton channel. These two domains are linked by a central stalk rotating inside the F(1) region and a stationary peripheral stalk. During catalysis, ATP synthesis in the catalytic domain of F(1) is coupled via a rotary mechanism of the central stalk subunits to proton translocation. With the subunit c (ATP5MC1), forms the proton-conducting channel in the F(0) domain, that contains two crucial half-channels (inlet and outlet) that facilitate proton movement from the mitochondrial intermembrane space (IMS) into the matrix. Protons are taken up via the inlet half-channel and released through the outlet half-channel, following a Grotthuss mechanism. The polypeptide is ATP synthase F(0) complex subunit a (Papio hamadryas (Hamadryas baboon)).